The following is a 92-amino-acid chain: Small ribosomal subunit protein bS20 (92 aa).

Residues 1-23 form a disordered region; that stretch reads MANSPSAKKRAKQAEKRRSHNAS. Basic residues predominate over residues 7 to 20; it reads AKKRAKQAEKRRSH.

This sequence belongs to the bacterial ribosomal protein bS20 family.

In terms of biological role, binds directly to 16S ribosomal RNA. This Ectopseudomonas mendocina (strain ymp) (Pseudomonas mendocina) protein is Small ribosomal subunit protein bS20.